Reading from the N-terminus, the 443-residue chain is ATP-dependent protease ATPase subunit HslU (443 aa).

ATP-binding positions include Ile-18, 60-65, Asp-256, Glu-321, and Arg-393; that span reads GVGKTE.

Belongs to the ClpX chaperone family. HslU subfamily. A double ring-shaped homohexamer of HslV is capped on each side by a ring-shaped HslU homohexamer. The assembly of the HslU/HslV complex is dependent on binding of ATP.

The protein localises to the cytoplasm. Its function is as follows. ATPase subunit of a proteasome-like degradation complex; this subunit has chaperone activity. The binding of ATP and its subsequent hydrolysis by HslU are essential for unfolding of protein substrates subsequently hydrolyzed by HslV. HslU recognizes the N-terminal part of its protein substrates and unfolds these before they are guided to HslV for hydrolysis. The sequence is that of ATP-dependent protease ATPase subunit HslU from Escherichia coli O17:K52:H18 (strain UMN026 / ExPEC).